A 325-amino-acid chain; its full sequence is D site-binding protein (325 aa).

3 disordered regions span residues 1–99 (MARP…APGL), 127–200 (GLPP…DTVE), and 229–255 (RFSE…EQKD). Residues 17–28 (GPAGTPPGGGAL) show a composition bias toward gly residues. Low complexity-rich tracts occupy residues 29 to 38 (LGLRSLLQGT) and 57 to 80 (ALPA…PAGA). Position 86 is a phosphoserine (Ser86). Positions 129–153 (PPSPPPPGGPSPEPSPARTPAPSPG) are enriched in pro residues. Residues 157–167 (CGSASPRSSPG) show a composition bias toward low complexity. The bZIP domain maps to 255–318 (DEKYWSRRYK…SHYRAVLSRY (64 aa)). A basic motif region spans residues 257–279 (KYWSRRYKNNEAAKRSRDARRLK). The interval 283–297 (ISVRAAFLEKENALL) is leucine-zipper.

It belongs to the bZIP family. PAR subfamily. In terms of assembly, binds DNA as a homodimer or a heterodimer. Can form a heterodimer with TEF. In terms of tissue distribution, ubiquitously expressed. Expressed in the suprachiasmatic nuclei (SCN) and in most peripheral tissues, with a strong circadian rhythmicity.

The protein localises to the nucleus. Its function is as follows. This transcriptional activator recognizes and binds to the sequence 5'-RTTAYGTAAY-3' found in the promoter of genes such as albumin, CYP2A4 and CYP2A5. It is not essential for circadian rhythm generation, but modulates important clock output genes. May be a direct target for regulation by the circadian pacemaker component clock. May affect circadian period and sleep regulation. The protein is D site-binding protein (DBP) of Homo sapiens (Human).